Reading from the N-terminus, the 197-residue chain is Adenylate kinase 1 (197 aa).

19–24 (GSGKGT) is an ATP binding site. Positions 39–68 (SSGDLLRAEVQSGSPKGKELKAMMERGELV) are NMP. AMP is bound by residues Ser40, Arg45, 95-98 (GYPR), and Gln102. Residues 132–142 (KRAETSNRVDD) are LID. Arg133 contributes to the ATP binding site. 2 residues coordinate AMP: Arg139 and Arg150. Gly178 serves as a coordination point for ATP.

The protein belongs to the adenylate kinase family. AK1 subfamily. In terms of assembly, monomer. The cofactor is Mg(2+).

The protein resides in the cytoplasm. It catalyses the reaction AMP + ATP = 2 ADP. It functions in the pathway purine metabolism; purine nucleotide biosynthesis. Its function is as follows. Catalyzes the reversible transfer of the terminal phosphate group between ATP and AMP. Plays an important role in cellular energy homeostasis and in adenine nucleotide metabolism. This chain is Adenylate kinase 1, found in Schistosoma mansoni (Blood fluke).